Consider the following 172-residue polypeptide: Protein-export protein SecB (172 aa).

This sequence belongs to the SecB family. Homotetramer, a dimer of dimers. One homotetramer interacts with 1 SecA dimer.

The protein resides in the cytoplasm. Functionally, one of the proteins required for the normal export of preproteins out of the cell cytoplasm. It is a molecular chaperone that binds to a subset of precursor proteins, maintaining them in a translocation-competent state. It also specifically binds to its receptor SecA. This Xylella fastidiosa (strain 9a5c) protein is Protein-export protein SecB.